The chain runs to 284 residues: D-tagatose-1,6-bisphosphate aldolase subunit GatY (284 aa).

Aspartate 82 (proton donor) is an active-site residue. Zn(2+) is bound by residues histidine 83 and histidine 180. Glycine 181 contacts dihydroxyacetone phosphate. Histidine 208 contributes to the Zn(2+) binding site. Residues 209 to 211 (GAS) and 230 to 233 (NVAT) each bind dihydroxyacetone phosphate.

It belongs to the class II fructose-bisphosphate aldolase family. TagBP aldolase GatY subfamily. In terms of assembly, forms a complex with GatZ. Zn(2+) serves as cofactor.

It catalyses the reaction D-tagatofuranose 1,6-bisphosphate = D-glyceraldehyde 3-phosphate + dihydroxyacetone phosphate. Its pathway is carbohydrate metabolism; D-tagatose 6-phosphate degradation; D-glyceraldehyde 3-phosphate and glycerone phosphate from D-tagatose 6-phosphate: step 2/2. Its function is as follows. Catalytic subunit of the tagatose-1,6-bisphosphate aldolase GatYZ, which catalyzes the reversible aldol condensation of dihydroxyacetone phosphate (DHAP or glycerone-phosphate) with glyceraldehyde 3-phosphate (G3P) to produce tagatose 1,6-bisphosphate (TBP). Requires GatZ subunit for full activity and stability. Is involved in the catabolism of galactitol. The protein is D-tagatose-1,6-bisphosphate aldolase subunit GatY of Shigella boydii serotype 4 (strain Sb227).